We begin with the raw amino-acid sequence, 652 residues long: Leucine aminopeptidase 2 (652 aa).

A peptide is bound by residues Gln-165–Glu-167 and Pro-293–Glu-298. His-322 is a binding site for Zn(2+). The active-site Proton acceptor is the Glu-323. His-326 and Glu-345 together coordinate Zn(2+). Tyr-411 (proton donor) is an active-site residue.

Belongs to the peptidase M1 family. The cofactor is Zn(2+).

It localises to the cytoplasm. It is found in the nucleus. The enzyme catalyses an epoxide + H2O = an ethanediol. Its function is as follows. Aminopeptidase that preferentially cleaves di- and tripeptides. Also has low epoxide hydrolase activity (in vitro). Can hydrolyze the epoxide leukotriene LTA(4) but it forms preferentially 5,6-dihydroxy-7,9,11,14-eicosatetraenoic acid rather than the cytokine leukotriene B(4) as the product compared to the homologous mammalian enzyme (in vitro). The protein is Leucine aminopeptidase 2 of Candida glabrata (strain ATCC 2001 / BCRC 20586 / JCM 3761 / NBRC 0622 / NRRL Y-65 / CBS 138) (Yeast).